The sequence spans 637 residues: CD2-associated protein (637 aa).

The SH3 1; truncated domain maps to 1-59; sequence MVDYIVEYDYDAVHDDELTIRVGEIIRNVKKLQEEGWLEGELNGRRGMFPDNFVKEIKR. The segment at 1–175 is interaction with ANLN and localization to the midbody; sequence MVDYIVEYDY…ESTEDGETHN (175 aa). Lys-58 is covalently cross-linked (Glycyl lysine isopeptide (Lys-Gly) (interchain with G-Cter in SUMO2)). Phosphoserine is present on residues Ser-80 and Ser-86. In terms of domain architecture, SH3 2 spans 108 to 167; the sequence is TKKRQCKVLFDYSPQNEDELELIVGDVIDVIEEVEEGWWSGTLNNKLGLFPSNFVKELES. A compositionally biased stretch (basic and acidic residues) spans 166-177; that stretch reads ESTEDGETHNAQ. Residues 166 to 209 form a disordered region; the sequence is ESTEDGETHNAQEESEVPLTGPTSPLPSPGNGSEPAPGSVAQPK. Phosphoserine is present on Ser-224. The interval 226–254 is disordered; sequence KLRTRTSSSETEEKKTEKPLILQPLGSRT. The 62-residue stretch at 269-330 folds into the SH3 3 domain; the sequence is KAKEYCRTLF…PDNFAVQISE (62 aa). The segment at 333–455 is disordered; the sequence is KDFPKPKKPP…KLDPEQLPVR (123 aa). 3 consecutive short sequence motifs (SH3-binding) follow at residues 336-352, 378-397, and 410-422; these read PKPK…APKP, KPSK…APTK, and PKRP…PPPP. Pro residues predominate over residues 341-351; the sequence is PPPPAKGPAPK. A compositionally biased stretch (basic and acidic residues) spans 356-379; it reads AAEKKAFPLKAEEKDEKSLLEQKP. Over residues 437 to 449 the composition is skewed to basic and acidic residues; sequence IDTEPVSKPKLDP. Phosphoserine is present on residues Ser-458, Ser-469, Ser-510, and Ser-514. The interval 488–555 is disordered; it reads HLTANRPKMP…SLSTPSSASK (68 aa). The span at 517–539 shows a compositional bias: basic and acidic residues; that stretch reads KTLKLPKEDDSGNLKPLEFKKDA. Lys-523 is covalently cross-linked (Glycyl lysine isopeptide (Lys-Gly) (interchain with G-Cter in SUMO2)). The span at 540-555 shows a compositional bias: low complexity; it reads SYSSKSSLSTPSSASK. At Thr-563 the chain carries Phosphothreonine. A coiled-coil region spans residues 578 to 636; it reads RNSVDELRAQIIELLCIVDALKKDHGKELEKLRKELEEEKAMRSNLEVEIAKLKKAVLL. Ser-580 is subject to Phosphoserine.

As to quaternary structure, homodimer. Interacts with F-actin, PKD2, NPHS1 and NPHS2. Interacts with WTIP. Interacts with DDN; interaction is direct. Interacts (via SH3 2 domain) with CBL (via phosphorylated C-terminus). Interacts with BCAR1/p130Cas (via SH3 domain). Interacts with MVB12A and ARHGAP17. Interacts with ANLN, CD2 and CBLB. Interacts with PDCD6IP and TSG101. Interacts with RIN3. Interacts directly with RET (inactive) and CBLC; upon RET activation by GDNF suggested to dissociate from RET as CBLC:CD2AP complex. Interacts with CGNL1 and SH3BP1; probably part of a complex at cell junctions. Interacts with CAPZA1. Post-translationally, phosphorylated on tyrosine residues; probably by c-Abl, Fyn and c-Src. Expressed in podocytes (at protein level).

It localises to the cytoplasm. The protein resides in the cytoskeleton. Its subcellular location is the cell projection. It is found in the ruffle. The protein localises to the cell junction. Seems to act as an adapter protein between membrane proteins and the actin cytoskeleton. In collaboration with CBLC, modulates the rate of RET turnover and may act as regulatory checkpoint that limits the potency of GDNF on neuronal survival. Controls CBLC function, converting it from an inhibitor to a promoter of RET degradation. May play a role in receptor clustering and cytoskeletal polarity in the junction between T-cell and antigen-presenting cell. May anchor the podocyte slit diaphragm to the actin cytoskeleton in renal glomerolus. Also required for cytokinesis. Plays a role in epithelial cell junctions formation. In Mus musculus (Mouse), this protein is CD2-associated protein (Cd2ap).